The sequence spans 98 residues: Small ribosomal subunit protein eS24 (98 aa).

The protein belongs to the eukaryotic ribosomal protein eS24 family.

The sequence is that of Small ribosomal subunit protein eS24 from Thermococcus sibiricus (strain DSM 12597 / MM 739).